The primary structure comprises 347 residues: NHL repeat-containing protein 3 (347 aa).

The first 25 residues, 1–25 (MARFWVCVAGAGFFLAFLVLHSRFC), serve as a signal peptide directing secretion. N-linked (GlcNAc...) asparagine glycosylation is present at N32. The stretch at 47–93 (RLDVGWPKHPEYFTGTTFCVAVDSLNGLVYIGQRGDNIPKILVFTED) is one NHL 1 repeat. A glycan (N-linked (GlcNAc...) asparagine) is linked at N101. NHL repeat units lie at residues 150–196 (TPGK…LSQD) and 200–243 (LWLH…FDKD). N206 and N278 each carry an N-linked (GlcNAc...) asparagine glycan. The NHL 4 repeat unit spans residues 294–338 (GECSVISTIQLADQVLPHLLEVDRKTGAVYVAEIGAKQVQKYVPL).

The protein localises to the secreted. This is NHL repeat-containing protein 3 (NHLRC3) from Homo sapiens (Human).